A 51-amino-acid chain; its full sequence is Large ribosomal subunit protein bL33 (51 aa).

This sequence belongs to the bacterial ribosomal protein bL33 family.

The sequence is that of Large ribosomal subunit protein bL33 from Vesicomyosocius okutanii subsp. Calyptogena okutanii (strain HA).